The primary structure comprises 522 residues: GMP synthase [glutamine-hydrolyzing] (522 aa).

The Glutamine amidotransferase type-1 domain maps to 9–204; it reads KILILDFGAQ…VVDICGCQTL (196 aa). The active-site Nucleophile is the Cys-86. Catalysis depends on residues His-178 and Glu-180. The GMPS ATP-PPase domain maps to 205 to 397; that stretch reads WTAANIIEDQ…LGLPHAMVYR (193 aa). An ATP-binding site is contributed by 232 to 238; the sequence is SGGVDSS.

Homodimer.

It carries out the reaction XMP + L-glutamine + ATP + H2O = GMP + L-glutamate + AMP + diphosphate + 2 H(+). The protein operates within purine metabolism; GMP biosynthesis; GMP from XMP (L-Gln route): step 1/1. Its function is as follows. Catalyzes the synthesis of GMP from XMP. The polypeptide is GMP synthase [glutamine-hydrolyzing] (Xylella fastidiosa (strain M12)).